A 174-amino-acid chain; its full sequence is NADH-quinone oxidoreductase subunit C (174 aa).

This sequence belongs to the complex I 30 kDa subunit family. NDH-1 is composed of 14 different subunits. Subunits NuoB, C, D, E, F, and G constitute the peripheral sector of the complex.

Its subcellular location is the cell membrane. The enzyme catalyses a quinone + NADH + 5 H(+)(in) = a quinol + NAD(+) + 4 H(+)(out). NDH-1 shuttles electrons from NADH, via FMN and iron-sulfur (Fe-S) centers, to quinones in the respiratory chain. The immediate electron acceptor for the enzyme in this species is believed to be ubiquinone. Couples the redox reaction to proton translocation (for every two electrons transferred, four hydrogen ions are translocated across the cytoplasmic membrane), and thus conserves the redox energy in a proton gradient. This chain is NADH-quinone oxidoreductase subunit C, found in Roseiflexus sp. (strain RS-1).